Consider the following 363-residue polypeptide: Type 3 secretion system translocon protein SctB (363 aa).

Residues 99 to 120 traverse the membrane as a helical segment; that stretch reads ISSLSSNAVSLIISVAVLLSAL.

It belongs to the SctB/SipC family. The core secretion machinery of the T3SS is composed of approximately 20 different proteins, including cytoplasmic components, a base, an export apparatus and a needle. This subunit is involved in the formation of a pore, called the translocon, in host membrane.

It localises to the secreted. The protein localises to the host membrane. Component of the type III secretion system (T3SS), also called injectisome, which is used to inject bacterial effector proteins into eukaryotic host cells. IpaB/SctE and IpaC/SctB are inserted into the host membrane where they form a pore and allow the translocation of effector proteins into the cytosol of target cells. This Shigella dysenteriae protein is Type 3 secretion system translocon protein SctB.